Here is a 648-residue protein sequence, read N- to C-terminus: Probable potassium transport system protein Kup 1 (648 aa).

The interval 1–31 (MSDAVTDADGSSAQSHAQSAGHHAVQGHGGH) is disordered. A compositionally biased stretch (low complexity) spans 10 to 26 (GSSAQSHAQSAGHHAVQ). A run of 12 helical transmembrane segments spans residues 39-59 (LAVG…LYAL), 73-93 (LLHI…IVTF), 130-150 (IILL…ITPA), 165-185 (PDMH…LFFI), 193-213 (VAAF…VLGA), 243-263 (FLAM…YADM), 275-295 (WLVF…SLLI), 317-337 (LLFI…SGAF), 364-384 (IFIP…VLVF), 394-414 (YGIA…VVLF), 421-441 (APAA…YLGA), and 446-466 (IPDG…LLTT).

It belongs to the HAK/KUP transporter (TC 2.A.72) family.

It is found in the cell inner membrane. The catalysed reaction is K(+)(in) + H(+)(in) = K(+)(out) + H(+)(out). In terms of biological role, transport of potassium into the cell. Likely operates as a K(+):H(+) symporter. The polypeptide is Probable potassium transport system protein Kup 1 (Novosphingobium aromaticivorans (strain ATCC 700278 / DSM 12444 / CCUG 56034 / CIP 105152 / NBRC 16084 / F199)).